The chain runs to 814 residues: Valine--tRNA ligase (814 aa).

Residues P46–H56 carry the 'HIGH' region motif. Positions K536–S540 match the 'KMSKS' region motif. K539 contacts ATP.

The protein belongs to the class-I aminoacyl-tRNA synthetase family. ValS type 2 subfamily. As to quaternary structure, monomer.

It localises to the cytoplasm. The enzyme catalyses tRNA(Val) + L-valine + ATP = L-valyl-tRNA(Val) + AMP + diphosphate. Catalyzes the attachment of valine to tRNA(Val). As ValRS can inadvertently accommodate and process structurally similar amino acids such as threonine, to avoid such errors, it has a 'posttransfer' editing activity that hydrolyzes mischarged Thr-tRNA(Val) in a tRNA-dependent manner. The sequence is that of Valine--tRNA ligase from Rickettsia typhi (strain ATCC VR-144 / Wilmington).